We begin with the raw amino-acid sequence, 743 residues long: Photosystem I P700 chlorophyll a apoprotein A2 (743 aa).

8 helical membrane passes run I46 to A69, L135 to Q158, L175 to I199, M273 to Y291, L336 to Y359, A375 to V401, A423 to H445, and F526 to V544. [4Fe-4S] cluster is bound by residues C568 and C577. The next 2 membrane-spanning stretches (helical) occupy residues A584–W605 and L652–I674. Chlorophyll a-binding residues include H663, M671, and Y679. W680 is a binding site for phylloquinone. A helical membrane pass occupies residues L716–A736.

The protein belongs to the PsaA/PsaB family. The PsaA/B heterodimer binds the P700 chlorophyll special pair and subsequent electron acceptors. PSI consists of a core antenna complex that captures photons, and an electron transfer chain that converts photonic excitation into a charge separation. The cyanobacterial PSI reaction center is composed of one copy each of PsaA,B,C,D,E,F,I,J,K,L,M and X, and forms trimeric complexes. PSI electron transfer chain: 5 chlorophyll a, 1 chlorophyll a', 2 phylloquinones and 3 4Fe-4S clusters. PSI core antenna: 90 chlorophyll a, 22 carotenoids, 3 phospholipids and 1 galactolipid. P700 is a chlorophyll a/chlorophyll a' dimer, A0 is one or more chlorophyll a, A1 is one or both phylloquinones and FX is a shared 4Fe-4S iron-sulfur center. is required as a cofactor.

The protein localises to the cellular thylakoid membrane. The enzyme catalyses reduced [plastocyanin] + hnu + oxidized [2Fe-2S]-[ferredoxin] = oxidized [plastocyanin] + reduced [2Fe-2S]-[ferredoxin]. PsaA and PsaB bind P700, the primary electron donor of photosystem I (PSI), as well as the electron acceptors A0, A1 and FX. PSI is a plastocyanin/cytochrome c6-ferredoxin oxidoreductase, converting photonic excitation into a charge separation, which transfers an electron from the donor P700 chlorophyll pair to the spectroscopically characterized acceptors A0, A1, FX, FA and FB in turn. Oxidized P700 is reduced on the lumenal side of the thylakoid membrane by plastocyanin or cytochrome c6. This chain is Photosystem I P700 chlorophyll a apoprotein A2, found in Mastigocladus laminosus (Fischerella sp.).